A 505-amino-acid polypeptide reads, in one-letter code: Putative thymidine phosphorylase (505 aa).

This sequence belongs to the thymidine/pyrimidine-nucleoside phosphorylase family. Type 2 subfamily.

The enzyme catalyses thymidine + phosphate = 2-deoxy-alpha-D-ribose 1-phosphate + thymine. The chain is Putative thymidine phosphorylase from Parvibaculum lavamentivorans (strain DS-1 / DSM 13023 / NCIMB 13966).